The sequence spans 2026 residues: E3 ubiquitin-protein ligase TRIP12 (2026 aa).

Composition is skewed to polar residues over residues 1-10, 32-42, and 73-84; these read MSNRPNSNPG, GRNSLSLSVGS, and SSVSEPNITFSP. Residues 1 to 437 form a disordered region; sequence MSNRPNSNPG…SGESESDDSE (437 aa). 4 stretches are compositionally biased toward low complexity: residues 94–112, 135–161, 171–188, and 199–241; these read SSHF…AISP, AEPA…STPS, LLSS…SAAG, and AAKP…SSAA. Residues 359 to 371 are compositionally biased toward polar residues; sequence QKTTGSCASTSRR. The segment covering 379–391 has biased composition (basic and acidic residues); sequence GAAEARRQEKMAD. Residues 392–404 show a composition bias toward polar residues; the sequence is SDNNQDGANSSAA. The span at 412–430 shows a compositional bias: low complexity; it reads GASASSSVAGAVGMTTSGE. The region spanning 789-876 is the WWE domain; sequence MLKKGSAQTT…DPELAKCFIK (88 aa). Disordered stretches follow at residues 1008 to 1123 and 1441 to 1470; these read SNVT…SVSN and GCKD…KQDE. Positions 1040 to 1053 are enriched in basic residues; that stretch reads KRKRLPKRGPRRPK. The span at 1056 to 1065 shows a compositional bias: basic and acidic residues; sequence PPRDDDKVDN. Low complexity predominate over residues 1068-1079; it reads KSPTTTQSPKSS. The segment covering 1094–1104 has biased composition (polar residues); it reads TQANSANSEPS. Residues 1530–1604 form a K-box region; sequence EIIPTGEFIN…AMQRLLDTNP (75 aa). The 108-residue stretch at 1919–2026 folds into the HECT domain; it reads PDHGYTHDSR…REGQQSFHLS (108 aa). Residue cysteine 1993 is the Glycyl thioester intermediate of the active site.

The protein belongs to the UPL family. K-HECT subfamily.

It localises to the nucleus. The protein resides in the nucleoplasm. The enzyme catalyses S-ubiquitinyl-[E2 ubiquitin-conjugating enzyme]-L-cysteine + [acceptor protein]-L-lysine = [E2 ubiquitin-conjugating enzyme]-L-cysteine + N(6)-ubiquitinyl-[acceptor protein]-L-lysine.. Its pathway is protein modification; protein ubiquitination. Its function is as follows. E3 ubiquitin-protein ligase involved in ubiquitin fusion degradation (UFD) pathway and regulation of DNA repair. Part of the ubiquitin fusion degradation (UFD) pathway, a process that mediates ubiquitination of protein at their N-terminus, regardless of the presence of lysine residues in target proteins. Acts as a key regulator of DNA damage response by acting as a suppressor of RNF168, an E3 ubiquitin-protein ligase that promotes accumulation of 'Lys-63'-linked histone H2A and H2AX at DNA damage sites, thereby acting as a guard against excessive spreading of ubiquitinated chromatin at damaged chromosomes. The polypeptide is E3 ubiquitin-protein ligase TRIP12 (trip12) (Danio rerio (Zebrafish)).